Here is a 327-residue protein sequence, read N- to C-terminus: 2-methoxy-6-polyprenyl-1,4-benzoquinol methylase, mitochondrial (327 aa).

The transit peptide at 1–49 (MAAPRSCVLWSYCGHGWSRLAGDCRLPGFRRSWLGATLSARSLSQEKRA) directs the protein to the mitochondrion. S-adenosyl-L-methionine-binding positions include T117, D171, and 199–200 (DA).

It belongs to the class I-like SAM-binding methyltransferase superfamily. MenG/UbiE family. In terms of assembly, component of a multi-subunit COQ enzyme complex, composed of at least COQ3, COQ4, COQ5, COQ6, COQ7 and COQ9. Interacts with PYURF; the interaction is direct, stabilizes COQ5 protein and associates PYURF with COQ enzyme complex.

The protein localises to the mitochondrion inner membrane. It carries out the reaction 2-methoxy-6-(all-trans-decaprenyl)benzene-1,4-diol + S-adenosyl-L-methionine = 5-methoxy-2-methyl-3-(all-trans-decaprenyl)benzene-1,4-diol + S-adenosyl-L-homocysteine + H(+). It functions in the pathway cofactor biosynthesis; ubiquinone biosynthesis. Its function is as follows. Methyltransferase required for the conversion of 2-decaprenyl-6-methoxy-1,4-benzoquinol (DDMQH2) to 2-decaprenyl-3-methyl-6-methoxy-1,4-benzoquinol (DMQH2). The polypeptide is 2-methoxy-6-polyprenyl-1,4-benzoquinol methylase, mitochondrial (Rattus norvegicus (Rat)).